A 434-amino-acid chain; its full sequence is MDYLDLGPYSSASGTVRLPGSKSISNRVLLLAALAEGETTITNLLDSDDTRVMLDALGKLGVKLARDGDTCVVTGTRGAFTAKTADLFLGNAGTAVRPLTAALAVNGGDYRVHGVPRMHERPIGDLVDGLRQIGAQIDYELNEGYPPLRIKPATISVDAPIRVRGDVSSQFLTALLMTLPLVKAKDGRTVVEVDGELISKPYIDITIRLMARFGVTVERDGWQRFVVPAGVRYKSPGRIMVEGDASSASYFLAAGALGGGPLRVEGVGRASIQGDVGFANALMQMGANVTMGDDWIDVRGIGHDHGKLEPIDMDFNLIPDAAMTIAVAALFANGTSTLRNIASWRVKETDRIAAMATELRKVGAIVEEGPDYLVVTPPEKLTPNAAIDTYDDHRMAMCFSLVSLGGVPVRINDPKCVGKTFPDYFDRFAALAKA.

3 residues coordinate 3-phosphoshikimate: K22, S23, and R27. K22 contributes to the phosphoenolpyruvate binding site. Phosphoenolpyruvate is bound by residues G93 and R121. The 3-phosphoshikimate site is built by S168, S169, Q170, S199, D320, and K347. Position 170 (Q170) interacts with phosphoenolpyruvate. The active-site Proton acceptor is D320. The phosphoenolpyruvate site is built by R351, R394, and K419.

Belongs to the EPSP synthase family. Monomer.

It is found in the cytoplasm. It catalyses the reaction 3-phosphoshikimate + phosphoenolpyruvate = 5-O-(1-carboxyvinyl)-3-phosphoshikimate + phosphate. The protein operates within metabolic intermediate biosynthesis; chorismate biosynthesis; chorismate from D-erythrose 4-phosphate and phosphoenolpyruvate: step 6/7. In terms of biological role, catalyzes the transfer of the enolpyruvyl moiety of phosphoenolpyruvate (PEP) to the 5-hydroxyl of shikimate-3-phosphate (S3P) to produce enolpyruvyl shikimate-3-phosphate and inorganic phosphate. This Burkholderia orbicola (strain MC0-3) protein is 3-phosphoshikimate 1-carboxyvinyltransferase.